Consider the following 242-residue polypeptide: Ubiquinone biosynthesis O-methyltransferase (242 aa).

S-adenosyl-L-methionine is bound by residues arginine 44, glycine 64, aspartate 85, and methionine 129.

Belongs to the methyltransferase superfamily. UbiG/COQ3 family.

The enzyme catalyses a 3-demethylubiquinol + S-adenosyl-L-methionine = a ubiquinol + S-adenosyl-L-homocysteine + H(+). The catalysed reaction is a 3-(all-trans-polyprenyl)benzene-1,2-diol + S-adenosyl-L-methionine = a 2-methoxy-6-(all-trans-polyprenyl)phenol + S-adenosyl-L-homocysteine + H(+). It participates in cofactor biosynthesis; ubiquinone biosynthesis. Functionally, O-methyltransferase that catalyzes the 2 O-methylation steps in the ubiquinone biosynthetic pathway. This chain is Ubiquinone biosynthesis O-methyltransferase, found in Salmonella arizonae (strain ATCC BAA-731 / CDC346-86 / RSK2980).